Consider the following 175-residue polypeptide: Ribosome maturation factor RimM (175 aa).

One can recognise a PRC barrel domain in the interval 96 to 175 (EGDYYWHDLI…TITVDWDAGF (80 aa)).

The protein belongs to the RimM family. As to quaternary structure, binds ribosomal protein uS19.

The protein resides in the cytoplasm. Functionally, an accessory protein needed during the final step in the assembly of 30S ribosomal subunit, possibly for assembly of the head region. Essential for efficient processing of 16S rRNA. May be needed both before and after RbfA during the maturation of 16S rRNA. It has affinity for free ribosomal 30S subunits but not for 70S ribosomes. The sequence is that of Ribosome maturation factor RimM from Actinobacillus pleuropneumoniae serotype 5b (strain L20).